Reading from the N-terminus, the 345-residue chain is CCAAT/enhancer-binding protein beta (345 aa).

The segment at 1-24 (MQRLVAWDPACLPLPPPPPAFKSM) is required for Lys-174 sumoylation. Position 3 is an asymmetric dimethylarginine; by CARM1 (Arg3). A required for MYC transcriptional repression region spans residues 24-135 (MEVANFYYEA…YGGKNCKKPA (112 aa)). Position 43 is an N6-acetyllysine; alternate (Lys43). Residue Lys43 is modified to N6-methylated lysine; alternate. Disordered stretches follow at residues 46 to 67 (PAAPPAARPGPRPPAGELGSIG) and 79 to 116 (LEPLGAPQAPAPATATDTFEAAPPAPAPAPASSGQHHD). A compositionally biased stretch (pro residues) spans 47–59 (AAPPAARPGPRPP). The span at 84–100 (APQAPAPATATDTFEAA) shows a compositional bias: low complexity. Residues 116-124 (DFLSDLFSD) carry the 9aaTAD motif. Residues Lys129 and Lys132 each carry the N6-acetyllysine; by KAT2A and KAT2B modification. N6-acetyllysine; by KAT2A and KAT2B; alternate is present on Lys133. A Glycyl lysine isopeptide (Lys-Gly) (interchain with G-Cter in SUMO2); alternate cross-link involves residue Lys133. The interval 157-178 (FAPLHPPPPPPPPPAELKAEPG) is disordered. Residues 160–171 (LHPPPPPPPPPA) show a composition bias toward pro residues. Lys174 participates in a covalent cross-link: Glycyl lysine isopeptide (Lys-Gly) (interchain with G-Cter in SUMO2); alternate. Lys174 participates in a covalent cross-link: Glycyl lysine isopeptide (Lys-Gly) (interchain with G-Cter in SUMO); alternate. Glycyl lysine isopeptide (Lys-Gly) (interchain with G-Cter in SUMO2) cross-links involve residues Lys185 and Lys187. Low complexity predominate over residues 218 to 232 (SGSSGSLSTSSSSSP). Residues 218 to 271 (SGSSGSLSTSSSSSPPGTPSPADAKAPPTACYAGAAPAPSQVKSKAKKTVDKHS) are disordered. At Thr226 the chain carries Phosphothreonine; by GSK3-beta. 2 O-linked (GlcNAc) serine glycosylation sites follow: Ser227 and Ser228. Residue Ser231 is modified to Phosphoserine; by GSK3-beta. At Thr235 the chain carries Phosphothreonine; by RPS6KA1, CDK2 and MAPK. Residues Lys260 and Lys262 each participate in a glycyl lysine isopeptide (Lys-Gly) (interchain with G-Cter in SUMO2) cross-link. Thr266 carries the phosphothreonine; by RPS6KA1 and PKC/PRKCA modification. The 64-residue stretch at 271–334 (SDEYKIRRER…STLRNLFKQL (64 aa)) folds into the bZIP domain. A basic motif region spans residues 275–295 (KIRRERNNIAVRKSRDKAKMR). Ser288 carries the post-translational modification Phosphoserine; by PKC/PRKCA. The segment at 297-304 (LETQHKVL) is leucine-zipper. Ser325 is subject to Phosphoserine; by CaMK2. A Glycyl lysine isopeptide (Lys-Gly) (interchain with G-Cter in SUMO2) cross-link involves residue Lys332.

Belongs to the bZIP family. C/EBP subfamily. Binds DNA as a homodimer and as a heterodimer. Interacts with ATF4. Binds DNA as a heterodimer with ATF4. Interacts with MYB; within the complex, MYB and CEBPB bind to different promoter regions. Can form stable heterodimers with CEBPD. Can form stable heterodimers with CEBPA and CEBPE. Interacts with SIX1. Isoform 2 and isoform 3 also form heterodimers. Interacts with TRIM28 and PTGES2. Interacts with PRDM16. Interacts with CCDC85B. Forms a complex with THOC5. Interacts with ZNF638; this interaction increases transcriptional activation. Interacts with CIDEA and CIDEC; these interactions increase transcriptional activation of a subset of CEBPB downstream target genes. Interacts with DDIT3/CHOP. Interacts with EP300; recruits EP300 to chromatin. Interacts with RORA; the interaction disrupts interaction with EP300. Interacts (not methylated) with MED23, MED26, SMARCA2, SMARCB1 and SMARCC1. Interacts with KAT2A and KAT2B. Interacts with ATF5; EP300 is required for ATF5 and CEBPB interaction and DNA binding. Interacts with NFE2L1; the heterodimer represses expression of DSPP during odontoblast differentiation. Methylated. Methylation at Arg-3 by CARM1 and at Lys-43 by EHMT2 inhibit transactivation activity. Methylation is probably inhibited by phosphorylation at Thr-235. In terms of processing, sumoylated by polymeric chains of SUMO2 or SUMO3. Sumoylation at Lys-174 is required for inhibition of T-cells proliferation. In adipocytes, sumoylation at Lys-174 by PIAS1 leads to ubiquitination and subsequent proteasomal degradation. Desumoylated by SENP2, which abolishes ubiquitination and stabilizes protein levels. Post-translationally, ubiquitinated, leading to proteasomal degradation. Phosphorylated at Thr-235 by MAPK and CDK2, serves to prime phosphorylation at Thr-226 and Ser-231 by GSK3B and acquire DNA-binding as well as transactivation activities, required to induce adipogenesis. MAPK and CDK2 act sequentially to maintain Thr-235 in the primed phosphorylated state during mitotical cloning expansion and thereby progression of terminal differentiation. Phosphorylation at Thr-266 enhances transactivation activity. Phosphorylation at Ser-325 in response to calcium increases transactivation activity. Phosphorylated at Thr-235 by RPS6KA1. In terms of processing, O-glycosylated, glycosylation at Ser-227 and Ser-228 prevents phosphorylation on Thr-235, Ser-231 and Thr-226 and DNA binding activity which delays the adipocyte differentiation program. Post-translationally, acetylated. Acetylation at Lys-43 is an important and dynamic regulatory event that contributes to its ability to transactivate target genes, including those associated with adipogenesis and adipocyte function. Deacetylation by HDAC1 represses its transactivation activity. Acetylated by KAT2A and KAT2B within a cluster of lysine residues between amino acids 129-133, this acetylation is strongly induced by glucocorticoid treatment and enhances transactivation activity. As to expression, expressed at low levels in the lung, kidney and spleen.

It is found in the nucleus. It localises to the cytoplasm. Its function is as follows. Important transcription factor regulating the expression of genes involved in immune and inflammatory responses. Also plays a significant role in adipogenesis, as well as in the gluconeogenic pathway, liver regeneration, and hematopoiesis. The consensus recognition site is 5'-T[TG]NNGNAA[TG]-3'. Its functional capacity is governed by protein interactions and post-translational protein modifications. During early embryogenesis, plays essential and redundant roles with CEBPA. Has a promitotic effect on many cell types such as hepatocytes and adipocytes but has an antiproliferative effect on T-cells by repressing MYC expression, facilitating differentiation along the T-helper 2 lineage. Binds to regulatory regions of several acute-phase and cytokines genes and plays a role in the regulation of acute-phase reaction and inflammation. Also plays a role in intracellular bacteria killing. During adipogenesis, is rapidly expressed and, after activation by phosphorylation, induces CEBPA and PPARG, which turn on the series of adipocyte genes that give rise to the adipocyte phenotype. The delayed transactivation of the CEBPA and PPARG genes by CEBPB appears necessary to allow mitotic clonal expansion and thereby progression of terminal differentiation. Essential for female reproduction because of a critical role in ovarian follicle development. Restricts osteoclastogenesis: together with NFE2L1; represses expression of DSPP during odontoblast differentiation. Functionally, essential for gene expression induction in activated macrophages. Plays a major role in immune responses such as CD4(+) T-cell response, granuloma formation and endotoxin shock. Not essential for intracellular bacteria killing. Acts as a dominant negative through heterodimerization with isoform 2. Promotes osteoblast differentiation and osteoclastogenesis. The protein is CCAAT/enhancer-binding protein beta of Homo sapiens (Human).